The primary structure comprises 48 residues: Large ribosomal subunit protein bL33A (48 aa).

The protein belongs to the bacterial ribosomal protein bL33 family.

This Metamycoplasma arthritidis (strain 158L3-1) (Mycoplasma arthritidis) protein is Large ribosomal subunit protein bL33A.